The sequence spans 404 residues: Probable ribosomal oxygenase HI_0396 (404 aa).

Residues E102–C231 form the JmjC domain. Fe cation is bound by residues H135, D137, and H199.

Belongs to the ROX family. It depends on Fe(2+) as a cofactor.

Oxygenase that catalyzes the hydroxylation of a ribosomal protein. The sequence is that of Probable ribosomal oxygenase HI_0396 from Haemophilus influenzae (strain ATCC 51907 / DSM 11121 / KW20 / Rd).